A 558-amino-acid chain; its full sequence is Oxygen-dependent choline dehydrogenase (558 aa).

4 to 33 (DYIIIGAGSAGNVLATRLTEDSDTTVLLLE) provides a ligand contact to FAD. His473 serves as the catalytic Proton acceptor.

The protein belongs to the GMC oxidoreductase family. FAD serves as cofactor.

The enzyme catalyses choline + A = betaine aldehyde + AH2. It catalyses the reaction betaine aldehyde + NAD(+) + H2O = glycine betaine + NADH + 2 H(+). Its pathway is amine and polyamine biosynthesis; betaine biosynthesis via choline pathway; betaine aldehyde from choline (cytochrome c reductase route): step 1/1. In terms of biological role, involved in the biosynthesis of the osmoprotectant glycine betaine. Catalyzes the oxidation of choline to betaine aldehyde and betaine aldehyde to glycine betaine at the same rate. This chain is Oxygen-dependent choline dehydrogenase, found in Citrobacter koseri (strain ATCC BAA-895 / CDC 4225-83 / SGSC4696).